The following is a 109-amino-acid chain: Iron-sulfur cluster assembly protein CyaY (109 aa).

Belongs to the frataxin family.

Its function is as follows. Involved in iron-sulfur (Fe-S) cluster assembly. May act as a regulator of Fe-S biogenesis. This is Iron-sulfur cluster assembly protein CyaY from Albidiferax ferrireducens (strain ATCC BAA-621 / DSM 15236 / T118) (Rhodoferax ferrireducens).